We begin with the raw amino-acid sequence, 137 residues long: GEL complex subunit OPTI (137 aa).

At Met1 to Val44 the chain is on the cytoplasmic side. A helical membrane pass occupies residues Ile45–Leu65. Residue Arg66 is a topological domain, lumenal. Residues Gly67–Leu84 traverse the membrane as a helical segment. The Cytoplasmic portion of the chain corresponds to Tyr85–Leu103. A helical transmembrane segment spans residues Thr104 to His127. The Lumenal portion of the chain corresponds to Leu128–Leu137.

It belongs to the EMC6 family. In terms of assembly, component of the GET- and EMC-like (GEL) complex, composed of RAB5IF/OPTI and TMCO1. The GEL complex is part of the multi-pass translocon (MPT) complex, composed of three subcomplexes, the GEL complex (composed of RAB5IF/OPTI and TMCO1), the BOS complex (composed of NCLN/Nicalin, NOMO and TMEM147) and the PAT complex (composed of WDR83OS/Asterix and CCDC47). The MPT complex associates with the SEC61 complex. Interacts with NDUFS3, NDUFA4, NDUFV1, NDUFA9 and NDUFS8 of the mitochondrial membrane respiratory chain NADH dehydrogenase (Complex I). Interacts with UQCRC2 of the ubiquinol-cytochrome c reductase complex (Complex III). Interacts with COX5A and COX7C of the cytochrome c oxidase complex (Complex IV). In terms of tissue distribution, expressed in embryonic stem cells and differentiated neuronal cells.

The protein resides in the endoplasmic reticulum membrane. Its subcellular location is the mitochondrion inner membrane. Its function is as follows. Component of the multi-pass translocon (MPT) complex that mediates insertion of multi-pass membrane proteins into the lipid bilayer of membranes. The MPT complex takes over after the SEC61 complex: following membrane insertion of the first few transmembrane segments of proteins by the SEC61 complex, the MPT complex occludes the lateral gate of the SEC61 complex to promote insertion of subsequent transmembrane regions. Within the MPT complex, the GEL subcomplex may mediate insertion of transmembrane regions into the membrane. In addition to its role in multi-pass membrane insertion, RAB5IF/OPTI also acts as an assembly factor for mitochondrial respiratory complexes. This chain is GEL complex subunit OPTI, found in Homo sapiens (Human).